We begin with the raw amino-acid sequence, 225 residues long: NAD(P)H-quinone oxidoreductase subunit K, chloroplastic (225 aa).

[4Fe-4S] cluster contacts are provided by Cys-43, Cys-44, Cys-108, and Cys-139.

Belongs to the complex I 20 kDa subunit family. As to quaternary structure, NDH is composed of at least 16 different subunits, 5 of which are encoded in the nucleus. The cofactor is [4Fe-4S] cluster.

It localises to the plastid. The protein localises to the chloroplast thylakoid membrane. The catalysed reaction is a plastoquinone + NADH + (n+1) H(+)(in) = a plastoquinol + NAD(+) + n H(+)(out). It carries out the reaction a plastoquinone + NADPH + (n+1) H(+)(in) = a plastoquinol + NADP(+) + n H(+)(out). Its function is as follows. NDH shuttles electrons from NAD(P)H:plastoquinone, via FMN and iron-sulfur (Fe-S) centers, to quinones in the photosynthetic chain and possibly in a chloroplast respiratory chain. The immediate electron acceptor for the enzyme in this species is believed to be plastoquinone. Couples the redox reaction to proton translocation, and thus conserves the redox energy in a proton gradient. In Nasturtium officinale (Watercress), this protein is NAD(P)H-quinone oxidoreductase subunit K, chloroplastic.